Here is a 487-residue protein sequence, read N- to C-terminus: Beta-barrel assembly-enhancing protease (487 aa).

Positions 1–27 (MFRQLKKNLVATLIAAMTIGQVAPAFA) are cleaved as a signal peptide. His-136 provides a ligand contact to Zn(2+). The active site involves Glu-137. Zn(2+) contacts are provided by His-140 and Glu-201. The active-site Proton donor is the Asp-205. 4 TPR repeats span residues 309 to 342 (RAAQYGRALQAMEANKYDEARKTLQPLLAAEPGN), 344 to 376 (WYLDLATDIDLGQNKANEAINRLKNARDLRTNP), 377 to 409 (VLQLNLANAYLQGGQPQEAANILNRYTFNNKDD), and 427 to 460 (DQELAARAEGYALAGRLDQAISLLSSASSQVKLG).

The protein belongs to the peptidase M48 family. BepA subfamily. As to quaternary structure, interacts with BamA and LoiP. Zn(2+) serves as cofactor.

The protein localises to the periplasm. With respect to regulation, protease activity is inhibited by the metal chelating reagents 1,10-phenanthroline and EDTA. In terms of biological role, functions both as a chaperone and a metalloprotease. Maintains the integrity of the outer membrane by promoting either the assembly or the elimination of outer membrane proteins, depending on their folding state. Promotes disulfide rearrangement of LptD during its biogenesis, and proteolytic degradation of LptD and BamA when their proper assembly is compromised. May facilitate membrane attachment of LoiP under unfavorable conditions. In Escherichia coli (strain K12), this protein is Beta-barrel assembly-enhancing protease.